The sequence spans 72 residues: Small ribosomal subunit protein bS18c (72 aa).

The protein belongs to the bacterial ribosomal protein bS18 family. Part of the 30S ribosomal subunit.

The protein resides in the plastid. It is found in the chloroplast. The protein is Small ribosomal subunit protein bS18c of Emiliania huxleyi (Coccolithophore).